Reading from the N-terminus, the 237-residue chain is UPF0173 metal-dependent hydrolase BruAb2_0628 (237 aa).

The protein belongs to the UPF0173 family.

The protein is UPF0173 metal-dependent hydrolase BruAb2_0628 of Brucella abortus biovar 1 (strain 9-941).